The following is a 154-amino-acid chain: MGLQKKLNYKKTESERSFYRGSNLKQVMGEDIVSKFDYIGPIRWIFLNYCTGYFIFVEELTNNSEIRSDRLEFIDTMNKIFSEAEQYFNSAPKERPKNPKSLAEYKYLGYYRLSFSNTNPDNSAIIRLNDVEVEKSELPPLLNLDTDEILDYAV.

This is an uncharacterized protein from Archaeoglobus fulgidus (strain ATCC 49558 / DSM 4304 / JCM 9628 / NBRC 100126 / VC-16).